Consider the following 127-residue polypeptide: Large ribosomal subunit protein bL12 (127 aa).

An N6-methyllysine mark is found at Lys-77 and Lys-88.

The protein belongs to the bacterial ribosomal protein bL12 family. Homodimer. Part of the ribosomal stalk of the 50S ribosomal subunit. Forms a multimeric L10(L12)X complex, where L10 forms an elongated spine to which 2 to 4 L12 dimers bind in a sequential fashion. Binds GTP-bound translation factors.

Its function is as follows. Forms part of the ribosomal stalk which helps the ribosome interact with GTP-bound translation factors. Is thus essential for accurate translation. This chain is Large ribosomal subunit protein bL12, found in Nitratidesulfovibrio vulgaris (strain DSM 19637 / Miyazaki F) (Desulfovibrio vulgaris).